We begin with the raw amino-acid sequence, 221 residues long: UPF0758 protein Ent638_0101 (221 aa).

An MPN domain is found at 99–221; it reads PLLSPEMTKD…YVSFAEQGWI (123 aa). The Zn(2+) site is built by His170, His172, and Asp183. Residues 170 to 183 carry the JAMM motif motif; the sequence is HNHPSGCAEPSKAD.

This sequence belongs to the UPF0758 family. YicR subfamily.

In Enterobacter sp. (strain 638), this protein is UPF0758 protein Ent638_0101.